The chain runs to 64 residues: Large ribosomal subunit protein bL28 (64 aa).

The protein belongs to the bacterial ribosomal protein bL28 family.

This is Large ribosomal subunit protein bL28 from Syntrophobacter fumaroxidans (strain DSM 10017 / MPOB).